The chain runs to 460 residues: Antizyme inhibitor 2 (460 aa).

A necessary for polyamine uptake stimulation region spans residues 117 to 140 (QIAQIKYAAKHGIQLLSFDNEMEL).

This sequence belongs to the Orn/Lys/Arg decarboxylase class-II family. ODC antizyme inhibitor subfamily. In terms of assembly, monomer. Interacts with OAZ1, OAZ2 and OAZ3; this interaction disrupts the interaction between the antizyme and ODC1. Does not form a heterodimer with ODC1. In terms of processing, ubiquitinated, leading to its proteasomal degradation; a process that is reduced in presence of antizymes. May also be degraded through the lysosomal degradative pathway in a proteasomal-independent manner. As to expression, expressed in the neocortex, thalamus, hippocampus, cerebellum, medulla oblongata, gray and white matter. Expressed in neurons, oligodendrocytes, basket, Purkinje and pyramidal cells. Expressed in spermatocytes and Leydig cells of the testis. Expressed in luteal theca cells lining corpus luteum cysts and in hilus cells of the ovary. Expressed in primary and neoplastic mast cells (MC) (at protein level). Highly expressed in brain. Also expressed in testis.

The protein resides in the nucleus. Its subcellular location is the cytoplasm. It localises to the perinuclear region. The protein localises to the membrane. It is found in the cytoplasmic vesicle. The protein resides in the endoplasmic reticulum-Golgi intermediate compartment. Its subcellular location is the golgi apparatus. It localises to the cis-Golgi network. The protein localises to the trans-Golgi network. It is found in the cytoplasmic granule. The protein resides in the cell projection. Its subcellular location is the axon. It localises to the dendrite. The protein localises to the perikaryon. Functionally, antizyme inhibitor (AZI) protein that positively regulates ornithine decarboxylase (ODC) activity and polyamine uptake. AZI is an enzymatically inactive ODC homolog that counteracts the negative effect of ODC antizymes (AZs) OAZ1, OAZ2 and OAZ3 on ODC activity by competing with ODC for antizyme-binding. Inhibits antizyme-dependent ODC degradation and releases ODC monomers from their inactive complex with antizymes, leading to formation of the catalytically active ODC homodimer and restoring polyamine production. Participates in the morphological integrity of the trans-Golgi network (TGN) and functions as a regulator of intracellular secretory vesicle trafficking. In Homo sapiens (Human), this protein is Antizyme inhibitor 2 (AZIN2).